The following is a 507-amino-acid chain: Interleukin-17 receptor E-like protein (507 aa).

Positions 1–21 are cleaved as a signal peptide; sequence MLAGQALAFLGLTWGTFQSLA.

It localises to the secreted. In Homo sapiens (Human), this protein is Interleukin-17 receptor E-like protein.